The chain runs to 300 residues: Ribosomal protein L11 methyltransferase (300 aa).

The S-adenosyl-L-methionine site is built by Thr-152, Gly-173, Asp-195, and Asn-234.

This sequence belongs to the methyltransferase superfamily. PrmA family.

Its subcellular location is the cytoplasm. It carries out the reaction L-lysyl-[protein] + 3 S-adenosyl-L-methionine = N(6),N(6),N(6)-trimethyl-L-lysyl-[protein] + 3 S-adenosyl-L-homocysteine + 3 H(+). In terms of biological role, methylates ribosomal protein L11. The sequence is that of Ribosomal protein L11 methyltransferase from Burkholderia thailandensis (strain ATCC 700388 / DSM 13276 / CCUG 48851 / CIP 106301 / E264).